The following is a 78-amino-acid chain: DNA-directed RNA polymerase subunit omega (78 aa).

It belongs to the RNA polymerase subunit omega family. In terms of assembly, in cyanobacteria the RNAP catalytic core is composed of 2 alpha, 1 beta, 1 beta', 1 gamma and 1 omega subunit. When a sigma factor is associated with the core the holoenzyme is formed, which can initiate transcription.

The catalysed reaction is RNA(n) + a ribonucleoside 5'-triphosphate = RNA(n+1) + diphosphate. Promotes RNA polymerase assembly. Latches the N- and C-terminal regions of the beta' subunit thereby facilitating its interaction with the beta and alpha subunits. This chain is DNA-directed RNA polymerase subunit omega, found in Trichormus variabilis (strain ATCC 29413 / PCC 7937) (Anabaena variabilis).